A 185-amino-acid polypeptide reads, in one-letter code: Ribosome-recycling factor (185 aa).

The segment at 138–157 is disordered; that stretch reads ELKKLEKDHTASEDEVKRAQ.

It belongs to the RRF family.

It is found in the cytoplasm. Functionally, responsible for the release of ribosomes from messenger RNA at the termination of protein biosynthesis. May increase the efficiency of translation by recycling ribosomes from one round of translation to another. The polypeptide is Ribosome-recycling factor (Desulfitobacterium hafniense (strain DSM 10664 / DCB-2)).